A 998-amino-acid polypeptide reads, in one-letter code: Collagen alpha-1(I) chain (998 aa).

Residues 1-998 (GGVSVPGPMG…PGPPGPPGPP (998 aa)) are disordered. P18, P21, P24, P33, P48, P63, P69, P78, and P84 each carry 4-hydroxyproline. The segment covering 26–39 (PQGFQGPPGSSGPM) has biased composition (low complexity). A compositionally biased stretch (basic and acidic residues) spans 51 to 65 (NGDDGEAGKPGRPGE). 5-hydroxylysine; alternate is present on K87. Residue K87 is glycosylated (O-linked (Gal...) hydroxylysine; alternate). S93 is subject to Phosphoserine. The segment covering 101–115 (DAGPAGPKQMGPRGL) has biased composition (low complexity). 4-hydroxyproline occurs at positions 116, 122, 143, 152, 155, 182, 185, 197, 203, 212, 218, 221, and 236. Positions 122-140 (PGASGPAGARGNDGATGAA) are enriched in low complexity. Residues 142 to 154 (PPGPTGPAGPPGF) show a composition bias toward pro residues. Residues 188 to 238 (AGAAGPAGNPGADGQPGAKGANGAPGIAGAPGFPGARGPSGPQGPSGAPGP) show a composition bias toward low complexity. K239 carries the post-translational modification 5-hydroxylysine. 4-hydroxyproline occurs at positions 245, 248, 260, 269, 284, 290, 299, and 305. Over residues 294–303 (GERGGPGSRG) the composition is skewed to gly residues. K314 bears the 5-hydroxylysine mark. 4-hydroxyproline occurs at positions 323, 332, 338, 344, 353, 356, 365, 374, 380, 392, 401, 410, 413, 431, 449, 455, 461, 467, 473, 479, 491, 500, 511, 523, 526, 532, 538, and 547. Low complexity predominate over residues 347-401 (KGLTGSPGSPGPDGKTGPPGPAGQDGRPGPAGPPGARGQAGVMGFPGPKGAAGEP). Low complexity predominate over residues 443 to 470 (QGPAGSPGFQGLPGPAGPPGEAGKPGEQ). A compositionally biased stretch (low complexity) spans 513–535 (NDGAKGDAGAPGAPGSQGAPGLQ). Residue K559 is modified to 5-hydroxylysine. 2 positions are modified to 4-hydroxyproline: P565 and P580. Positions 592–606 (TGPSGPAGPTGARGA) are enriched in low complexity. S595 is modified (phosphoserine). Residues P607, P613, P616, P625, P631, P649, P658, and P667 each carry the 4-hydroxyproline modification. Positions 619–646 (AGFAGPPGADGQPGAKGEPGDAGAKGDA) are enriched in low complexity. Positions 648–660 (PPGPAGPTGPPGP) are enriched in pro residues. K670 carries the post-translational modification 5-hydroxylysine. Residues 675-691 (SAGPPGATGFPGAAGRV) show a composition bias toward low complexity. A 4-hydroxyproline mark is found at P679 and P685. Position 693 is a 3-hydroxyproline (P693). 16 positions are modified to 4-hydroxyproline: P694, P703, P706, P727, P736, P744, P753, P771, P780, P783, P789, P804, P810, P816, P825, and P831. Residues 720-729 (ETGPAGRPGE) are compositionally biased toward low complexity. Low complexity predominate over residues 741-762 (KGSPGADGPAGAPGTPGPQGIA). Positions 803-813 (PPGPMGPPGLA) are enriched in pro residues. The segment covering 815–830 (PPGEAGREGSPGAEGS) has biased composition (low complexity). Residue K840 is modified to 5-hydroxylysine. The span at 848–863 (PGPPGAPGAPGAPGPV) shows a compositional bias: pro residues. Residues P851, P854, and P857 each carry the 4-hydroxyproline modification. A compositionally biased stretch (low complexity) spans 884–898 (AGPAGARGPAGPQGP). A compositionally biased stretch (basic and acidic residues) spans 899–913 (RGDKGETGEQGDRGI). Residue K902 is modified to 5-hydroxylysine. K914 is modified (5-hydroxylysine; alternate). Residue K914 is glycosylated (O-linked (Gal...) hydroxylysine; alternate). 4 positions are modified to 4-hydroxyproline: P929, P932, P950, and P965. The span at 932-965 (PGEQGPSGASGPAGPRGPPGSAGTPGKDGLNGLP) shows a compositional bias: low complexity. A 3-hydroxyproline modification is found at P970. A 4-hydroxyproline modification is found at P971. Pro residues predominate over residues 983 to 998 (VGPPGPPGPPGPPGPP). A 3-hydroxyproline modification is found at P985. Position 986 is a 4-hydroxyproline (P986). Position 988 is a 3-hydroxyproline (P988). P989 is subject to 4-hydroxyproline. P991 bears the 3-hydroxyproline mark. P992, P995, and P998 each carry 4-hydroxyproline.

Belongs to the fibrillar collagen family. In terms of assembly, trimers of one alpha 2(I) and two alpha 1(I) chains. Post-translationally, contains mostly 4-hydroxyproline. Proline residues at the third position of the tripeptide repeating unit (G-X-Y) are hydroxylated in some or all of the chains. Contains 3-hydroxyproline at a few sites. This modification occurs on the first proline residue in the sequence motif Gly-Pro-Hyp, where Hyp is 4-hydroxyproline. In terms of processing, lysine residues at the third position of the tripeptide repeating unit (G-X-Y) are 5-hydroxylated in some or all of the chains. Post-translationally, O-glycosylated on hydroxylated lysine residues. The O-linked glycan consists of a Glc-Gal disaccharide. Expressed in bones.

Its subcellular location is the secreted. The protein localises to the extracellular space. The protein resides in the extracellular matrix. Functionally, type I collagen is a member of group I collagen (fibrillar forming collagen). The sequence is that of Collagen alpha-1(I) chain from Glyptodon sp. (strain SLP-2019) (Giant armadillo).